A 165-amino-acid chain; its full sequence is NADH-quinone oxidoreductase subunit I (165 aa).

4Fe-4S ferredoxin-type domains are found at residues 57-86 and 96-125; these read RRYENGEERCIACKLCEAVCPALAITIESD and SRYDIDLTKCIFCGFCEESCPVDSIVETHI. 8 residues coordinate [4Fe-4S] cluster: C66, C69, C72, C76, C105, C108, C111, and C115.

This sequence belongs to the complex I 23 kDa subunit family. As to quaternary structure, NDH-1 is composed of 14 different subunits. Subunits NuoA, H, J, K, L, M, N constitute the membrane sector of the complex. It depends on [4Fe-4S] cluster as a cofactor.

The protein localises to the cell inner membrane. The enzyme catalyses a quinone + NADH + 5 H(+)(in) = a quinol + NAD(+) + 4 H(+)(out). NDH-1 shuttles electrons from NADH, via FMN and iron-sulfur (Fe-S) centers, to quinones in the respiratory chain. The immediate electron acceptor for the enzyme in this species is believed to be ubiquinone. Couples the redox reaction to proton translocation (for every two electrons transferred, four hydrogen ions are translocated across the cytoplasmic membrane), and thus conserves the redox energy in a proton gradient. The sequence is that of NADH-quinone oxidoreductase subunit I from Polaromonas naphthalenivorans (strain CJ2).